The sequence spans 174 residues: Peptide methionine sulfoxide reductase MsrA (174 aa).

Cys11 is an active-site residue.

Belongs to the MsrA Met sulfoxide reductase family.

It carries out the reaction L-methionyl-[protein] + [thioredoxin]-disulfide + H2O = L-methionyl-(S)-S-oxide-[protein] + [thioredoxin]-dithiol. It catalyses the reaction [thioredoxin]-disulfide + L-methionine + H2O = L-methionine (S)-S-oxide + [thioredoxin]-dithiol. Functionally, has an important function as a repair enzyme for proteins that have been inactivated by oxidation. Catalyzes the reversible oxidation-reduction of methionine sulfoxide in proteins to methionine. The chain is Peptide methionine sulfoxide reductase MsrA from Nitratiruptor sp. (strain SB155-2).